The primary structure comprises 448 residues: Adenylosuccinate synthetase (448 aa).

GTP contacts are provided by residues 22–28 and 50–52; these read GDEGKGK and GHT. Residue D23 is the Proton acceptor of the active site. The Mg(2+) site is built by D23 and G50. IMP-binding positions include 23–26, 48–51, T139, R153, Q234, T249, and R321; these read DEGK and NAGH. H51 (proton donor) is an active-site residue. Position 317-323 (317-323) interacts with substrate; sequence SVTGRPR. GTP-binding positions include R323, 349 to 351, and 431 to 433; these read KLD and STG.

It belongs to the adenylosuccinate synthetase family. In terms of assembly, homodimer. Requires Mg(2+) as cofactor.

Its subcellular location is the cytoplasm. The enzyme catalyses IMP + L-aspartate + GTP = N(6)-(1,2-dicarboxyethyl)-AMP + GDP + phosphate + 2 H(+). It participates in purine metabolism; AMP biosynthesis via de novo pathway; AMP from IMP: step 1/2. Functionally, plays an important role in the de novo pathway of purine nucleotide biosynthesis. Catalyzes the first committed step in the biosynthesis of AMP from IMP. The polypeptide is Adenylosuccinate synthetase (Paraburkholderia xenovorans (strain LB400)).